Consider the following 126-residue polypeptide: UPF0538 protein C2orf76 homolog (126 aa).

The protein belongs to the UPF0538 family.

The protein is UPF0538 protein C2orf76 homolog of Mus musculus (Mouse).